A 64-amino-acid chain; its full sequence is Large ribosomal subunit protein bL35 (64 aa).

Belongs to the bacterial ribosomal protein bL35 family.

In Carboxydothermus hydrogenoformans (strain ATCC BAA-161 / DSM 6008 / Z-2901), this protein is Large ribosomal subunit protein bL35.